The primary structure comprises 797 residues: MGTLGKAREAPRKPSHGCRAASKARLEAKPANSPFPSHPSLAHITQFRMMVSLGHLAKGASLDDLIDSCIQSFDADGNLCRSNQLLQVMLTMHRIVISSAELLQKVITLYKDALAKNSPGLCLKICYFVRYWITEFWVMFKMDASLTDTMEEFQELVKAKGEELHCRLIDTTQINARDWSRKLTQRIKSNTSKKRKVSLLFDHLEPEELSEHLTYLEFKSFRRISFSDYQNYLVNSCVKENPTMERSIALCNGISQWVQLMVLSRPTPQLRAEVFIKFIQVAQKLHQLQNFNTLMAVIGGLCHSSISRLKETSSHVPHEINKVLGEMTELLSSSRNYDNYRRAYGECTDFKIPILGVHLKDLISLYEAMPDYLEDGKVNVHKLLALYNHISELVQLQEVAPPLEANKDLVHLLTLSLDLYYTEDEIYELSYAREPRNHRAPPLTPSKPPVVVDWASGVSPKPDPKTISKHVQRMVDSVFKNYDHDQDGYISQEEFEKIAASFPFSFCVMDKDREGLISRDEITAYFMRASSIYSKLGLGFPHNFQETTYLKPTFCDNCAGFLWGVIKQGYRCKDCGMNCHKQCKDLVVFECKKRAKNPVAPTENNTSVGPVSNLCSLGAKDLLHAPEEGPFTFPNGEAVEHGEESKDRTIMLMGVSSQKISLRLKRAVAHKATQTESQPWIGSEGPSGPFVLSSPRKTAQDTLYVLPSPTSPCPSPVLVRKRAFVKWENKDSLIKSKEELRHLRLPTYQELEQEINTLKADNDALKIQLKYAQKKIESLQLEKSNHVLAQMEQGDCS.

The segment covering 1-12 (MGTLGKAREAPR) has biased composition (basic and acidic residues). The segment at 1–23 (MGTLGKAREAPRKPSHGCRAASK) is disordered. An N-terminal Ras-GEF domain is found at 53–176 (LGHLAKGASL…RLIDTTQINA (124 aa)). The tract at residues 57 to 110 (AKGASLDDLIDSCIQSFDADGNLCRSNQLLQVMLTMHRIVISSAELLQKVITLY) is ras exchanger motif region; required for transforming activity. Thr184 carries the post-translational modification Phosphothreonine; by PKC. The 232-residue stretch at 205–436 (EPEELSEHLT…YELSYAREPR (232 aa)) folds into the Ras-GEF domain. EF-hand domains lie at 470 to 505 (HVQR…FPFS) and 506 to 532 (FCVM…ASSI). 5 residues coordinate Ca(2+): Asp483, Asp485, Asp487, Tyr489, and Glu494. Residues 541-591 (PHNFQETTYLKPTFCDNCAGFLWGVIKQGYRCKDCGMNCHKQCKDLVVFEC) form a Phorbol-ester/DAG-type zinc finger. The interval 673–694 (TQTESQPWIGSEGPSGPFVLSS) is disordered. A suppress the PT region-mediated translocation to plasma membrane region spans residues 686-694 (PSGPFVLSS). A PT region; mediates the BCR-dependent translocation to plasma membrane region spans residues 718–797 (LVRKRAFVKW…LAQMEQGDCS (80 aa)). Residues 746-786 (PTYQELEQEINTLKADNDALKIQLKYAQKKIESLQLEKSNH) are a coiled coil.

This sequence belongs to the RASGRP family. As to quaternary structure, homodimer. Forms a signaling complex with DGKZ and HRAS. Interacts with F-actin. Interacts with SKAP1. As to expression, expressed in brain with higher expression in cerebellum, cerebral cortex and amygdala. Expressed in the hematopoietic system. Expressed in T-cells (at protein level). Expressed in NK cells (at protein level).

Its subcellular location is the cytoplasm. It is found in the cytosol. It localises to the cell membrane. The protein resides in the golgi apparatus membrane. The protein localises to the endoplasmic reticulum membrane. Autoinhibited. Activated by diacylglycerol and calcium binding, which induces a conformational change releasing the autoinhibitory state. Regulated by DGKA. Regulated by DGKZ. Regulated by PLC gamma and F-actin polymerization. Functions as a calcium- and diacylglycerol (DAG)-regulated nucleotide exchange factor specifically activating Ras through the exchange of bound GDP for GTP. Activates the Erk/MAP kinase cascade. Regulates T-cell/B-cell development, homeostasis and differentiation by coupling T-lymphocyte/B-lymphocyte antigen receptors to Ras. Regulates NK cell cytotoxicity and ITAM-dependent cytokine production by activation of Ras-mediated ERK and JNK pathways. Functions in mast cell degranulation and cytokine secretion, regulating FcERI-evoked allergic responses. May also function in differentiation of other cell types. The sequence is that of RAS guanyl-releasing protein 1 (RASGRP1) from Homo sapiens (Human).